The following is a 529-amino-acid chain: Peptide chain release factor 3 (529 aa).

The tr-type G domain maps to Ala-11–Met-280. GTP is bound by residues Ser-20–Thr-27, Asp-88–His-92, and Asn-142–Asp-145.

Belongs to the TRAFAC class translation factor GTPase superfamily. Classic translation factor GTPase family. PrfC subfamily.

It is found in the cytoplasm. Increases the formation of ribosomal termination complexes and stimulates activities of RF-1 and RF-2. It binds guanine nucleotides and has strong preference for UGA stop codons. It may interact directly with the ribosome. The stimulation of RF-1 and RF-2 is significantly reduced by GTP and GDP, but not by GMP. This chain is Peptide chain release factor 3, found in Yersinia pseudotuberculosis serotype O:1b (strain IP 31758).